The sequence spans 216 residues: Ras-related protein RabN1 (216 aa).

Position 15–22 (glycine 15–threonine 22) interacts with GTP. The Effector region signature appears at threonine 37–leucine 44. GTP-binding positions include aspartate 62–glutamine 66 and threonine 128–aspartate 131. Cysteine 216 is lipidated: S-geranylgeranyl cysteine.

It belongs to the small GTPase superfamily. Rab family.

Its subcellular location is the cell membrane. This chain is Ras-related protein RabN1 (rabN1), found in Dictyostelium discoideum (Social amoeba).